We begin with the raw amino-acid sequence, 290 residues long: Acetyl-coenzyme A carboxylase carboxyl transferase subunit beta (290 aa).

Residues 27-290 form the CoA carboxyltransferase N-terminal domain; that stretch reads LWVKCPSCES…LQKQPADAVA (264 aa). Zn(2+)-binding residues include cysteine 31, cysteine 34, cysteine 50, and cysteine 53. The segment at 31–53 adopts a C4-type zinc-finger fold; that stretch reads CPSCESTLYRTDVEANLHVCPKC.

The protein belongs to the AccD/PCCB family. As to quaternary structure, acetyl-CoA carboxylase is a heterohexamer composed of biotin carboxyl carrier protein (AccB), biotin carboxylase (AccC) and two subunits each of ACCase subunit alpha (AccA) and ACCase subunit beta (AccD). It depends on Zn(2+) as a cofactor.

It localises to the cytoplasm. The catalysed reaction is N(6)-carboxybiotinyl-L-lysyl-[protein] + acetyl-CoA = N(6)-biotinyl-L-lysyl-[protein] + malonyl-CoA. It participates in lipid metabolism; malonyl-CoA biosynthesis; malonyl-CoA from acetyl-CoA: step 1/1. Functionally, component of the acetyl coenzyme A carboxylase (ACC) complex. Biotin carboxylase (BC) catalyzes the carboxylation of biotin on its carrier protein (BCCP) and then the CO(2) group is transferred by the transcarboxylase to acetyl-CoA to form malonyl-CoA. This Cupriavidus taiwanensis (strain DSM 17343 / BCRC 17206 / CCUG 44338 / CIP 107171 / LMG 19424 / R1) (Ralstonia taiwanensis (strain LMG 19424)) protein is Acetyl-coenzyme A carboxylase carboxyl transferase subunit beta.